A 322-amino-acid chain; its full sequence is Methionyl-tRNA formyltransferase (322 aa).

Ser-115–Pro-118 contacts (6S)-5,6,7,8-tetrahydrofolate.

It belongs to the Fmt family.

It carries out the reaction L-methionyl-tRNA(fMet) + (6R)-10-formyltetrahydrofolate = N-formyl-L-methionyl-tRNA(fMet) + (6S)-5,6,7,8-tetrahydrofolate + H(+). Its function is as follows. Attaches a formyl group to the free amino group of methionyl-tRNA(fMet). The formyl group appears to play a dual role in the initiator identity of N-formylmethionyl-tRNA by promoting its recognition by IF2 and preventing the misappropriation of this tRNA by the elongation apparatus. The sequence is that of Methionyl-tRNA formyltransferase from Treponema denticola (strain ATCC 35405 / DSM 14222 / CIP 103919 / JCM 8153 / KCTC 15104).